Here is a 278-residue protein sequence, read N- to C-terminus: 4-hydroxy-tetrahydrodipicolinate reductase (278 aa).

NAD(+) contacts are provided by residues 13-18 (GAAGKM) and 111-113 (GTT). Residue His167 is the Proton donor/acceptor of the active site. A (S)-2,3,4,5-tetrahydrodipicolinate-binding site is contributed by His168. Lys171 (proton donor) is an active-site residue. A (S)-2,3,4,5-tetrahydrodipicolinate-binding site is contributed by 177–178 (GT).

Belongs to the DapB family.

It localises to the cytoplasm. The enzyme catalyses (S)-2,3,4,5-tetrahydrodipicolinate + NAD(+) + H2O = (2S,4S)-4-hydroxy-2,3,4,5-tetrahydrodipicolinate + NADH + H(+). The catalysed reaction is (S)-2,3,4,5-tetrahydrodipicolinate + NADP(+) + H2O = (2S,4S)-4-hydroxy-2,3,4,5-tetrahydrodipicolinate + NADPH + H(+). Its pathway is amino-acid biosynthesis; L-lysine biosynthesis via DAP pathway; (S)-tetrahydrodipicolinate from L-aspartate: step 4/4. Its function is as follows. Catalyzes the conversion of 4-hydroxy-tetrahydrodipicolinate (HTPA) to tetrahydrodipicolinate. This Nostoc punctiforme (strain ATCC 29133 / PCC 73102) protein is 4-hydroxy-tetrahydrodipicolinate reductase.